Here is a 229-residue protein sequence, read N- to C-terminus: Cytochrome c oxidase subunit 2 (229 aa).

The Mitochondrial intermembrane segment spans residues 1–26 (MSTWANLGLQDSASPLMEQLIFFHDH). A helical membrane pass occupies residues 27–48 (ALLILVMITVLVGYLMFMLFFN). The Mitochondrial matrix portion of the chain corresponds to 49-62 (SYVNRFLLHGQLIE). A helical membrane pass occupies residues 63–82 (MIWTILPAIILLFIAMPSLR). Topologically, residues 83-229 (LLYLLDEINE…IKWISSTVNS (147 aa)) are mitochondrial intermembrane. Residues His-161, Cys-196, Glu-198, Cys-200, His-204, and Met-207 each coordinate Cu cation. Glu-198 contacts Mg(2+).

Belongs to the cytochrome c oxidase subunit 2 family. Component of the cytochrome c oxidase (complex IV, CIV), a multisubunit enzyme composed of a catalytic core of 3 subunits and several supernumerary subunits. The complex exists as a monomer or a dimer and forms supercomplexes (SCs) in the inner mitochondrial membrane with ubiquinol-cytochrome c oxidoreductase (cytochrome b-c1 complex, complex III, CIII). Cu cation serves as cofactor.

The protein resides in the mitochondrion inner membrane. The catalysed reaction is 4 Fe(II)-[cytochrome c] + O2 + 8 H(+)(in) = 4 Fe(III)-[cytochrome c] + 2 H2O + 4 H(+)(out). In terms of biological role, component of the cytochrome c oxidase, the last enzyme in the mitochondrial electron transport chain which drives oxidative phosphorylation. The respiratory chain contains 3 multisubunit complexes succinate dehydrogenase (complex II, CII), ubiquinol-cytochrome c oxidoreductase (cytochrome b-c1 complex, complex III, CIII) and cytochrome c oxidase (complex IV, CIV), that cooperate to transfer electrons derived from NADH and succinate to molecular oxygen, creating an electrochemical gradient over the inner membrane that drives transmembrane transport and the ATP synthase. Cytochrome c oxidase is the component of the respiratory chain that catalyzes the reduction of oxygen to water. Electrons originating from reduced cytochrome c in the intermembrane space (IMS) are transferred via the dinuclear copper A center (CU(A)) of subunit 2 and heme A of subunit 1 to the active site in subunit 1, a binuclear center (BNC) formed by heme A3 and copper B (CU(B)). The BNC reduces molecular oxygen to 2 water molecules using 4 electrons from cytochrome c in the IMS and 4 protons from the mitochondrial matrix. This Drosophila lowei (Fruit fly) protein is Cytochrome c oxidase subunit 2 (mt:CoII).